The primary structure comprises 321 residues: Phosphate acyltransferase (321 aa).

Belongs to the PlsX family. As to quaternary structure, homodimer. Probably interacts with PlsY.

The protein localises to the cytoplasm. The enzyme catalyses a fatty acyl-[ACP] + phosphate = an acyl phosphate + holo-[ACP]. The protein operates within lipid metabolism; phospholipid metabolism. Catalyzes the reversible formation of acyl-phosphate (acyl-PO(4)) from acyl-[acyl-carrier-protein] (acyl-ACP). This enzyme utilizes acyl-ACP as fatty acyl donor, but not acyl-CoA. This chain is Phosphate acyltransferase, found in Chlamydia trachomatis serovar A (strain ATCC VR-571B / DSM 19440 / HAR-13).